The primary structure comprises 424 residues: uncharacterized protein (424 aa).

Helical transmembrane passes span 9–29 (ITWI…GILI), 41–61 (ASLF…GTLA), 86–106 (GAIL…IIAL), 119–139 (ADWQ…LLHM), 148–168 (ISTL…AVSL), 184–204 (WSAA…WEMI), 222–242 (LFLA…VTVG), 270–290 (VTVC…IAGF), 320–340 (VLTA…LFQI), 345–365 (LLKG…AAAL), and 377–397 (MALG…WALL).

Belongs to the amino acid-polyamine-organocation (APC) superfamily.

Its subcellular location is the cell membrane. This is an uncharacterized protein from Bacillus subtilis (strain 168).